Here is a 126-residue protein sequence, read N- to C-terminus: Actin-depolymerizing factor (126 aa).

In terms of domain architecture, ADF-H spans 1 to 126; the sequence is EDNCKLKFLE…SFDIIKSRAL (126 aa).

The protein belongs to the actin-binding proteins ADF family. In terms of tissue distribution, preferentially in mature anther.

Actin-depolymerizing protein. Severs actin filaments (F-actin) and binds to actin monomers. The chain is Actin-depolymerizing factor from Brassica napus (Rape).